A 131-amino-acid polypeptide reads, in one-letter code: Histone H2A.2 (131 aa).

Positions M1–A22 are disordered. S2 is subject to N-acetylserine. N6-acetyllysine occurs at positions 5 and 7. At Q105 the chain carries N5-methylglutamine. Phosphoserine is present on S128. Residues S128–Q129 carry the [ST]-Q motif motif.

The protein belongs to the histone H2A family. In terms of assembly, the nucleosome is a histone octamer containing two molecules each of H2A, H2B, H3 and H4 assembled in one H3-H4 heterotetramer and two H2A-H2B heterodimers. The octamer wraps approximately 147 bp of DNA. Post-translationally, phosphorylated to form H2AS128ph (gamma-H2A) in response to DNA double-strand breaks (DSBs) generated by exogenous genotoxic agents and by stalled replication forks. Phosphorylation is dependent on the DNA damage checkpoint kinases MEC1/ATR and TEL1/ATM, spreads on either side of a detected DSB site and may mark the surrounding chromatin for recruitment of proteins required for DNA damage signaling and repair. Gamma-H2A is removed from the DNA prior to the strand invasion-primer extension step of the repair process and subsequently dephosphorylated. Dephosphorylation is necessary for efficient recovery from the DNA damage checkpoint. In terms of processing, acetylated by ESA1 to form H2AK4ac and H2AK7ac.

It localises to the nucleus. The protein localises to the chromosome. In terms of biological role, core component of nucleosome which plays a central role in DNA double strand break (DSB) repair. Nucleosomes wrap and compact DNA into chromatin, limiting DNA accessibility to the cellular machineries which require DNA as a template. Histones thereby play a central role in transcription regulation, DNA repair, DNA replication and chromosomal stability. DNA accessibility is regulated via a complex set of post-translational modifications of histones, also called histone code, and nucleosome remodeling. The chain is Histone H2A.2 (HTA2) from Candida albicans (strain SC5314 / ATCC MYA-2876) (Yeast).